The primary structure comprises 424 residues: Geranylgeranyl pyrophosphate synthase D (424 aa).

The disordered stretch occupies residues 42–73; the sequence is PSATWPSVPKVHKRNRSTSLSDQQTAKKAHAN. Over residues 58–67 the composition is skewed to polar residues; the sequence is STSLSDQQTA. Residues K147, R150, and H179 each contribute to the isopentenyl diphosphate site. 2 residues coordinate Mg(2+): D186 and D190. Dimethylallyl diphosphate is bound at residue R195. Position 196 (R196) interacts with isopentenyl diphosphate. Residues K274, T275, Q311, K328, and K338 each contribute to the dimethylallyl diphosphate site.

It belongs to the FPP/GGPP synthase family. The cofactor is Mg(2+).

Its subcellular location is the cytoplasm. It catalyses the reaction isopentenyl diphosphate + dimethylallyl diphosphate = (2E)-geranyl diphosphate + diphosphate. It carries out the reaction isopentenyl diphosphate + (2E)-geranyl diphosphate = (2E,6E)-farnesyl diphosphate + diphosphate. The enzyme catalyses isopentenyl diphosphate + (2E,6E)-farnesyl diphosphate = (2E,6E,10E)-geranylgeranyl diphosphate + diphosphate. The protein operates within isoprenoid biosynthesis; farnesyl diphosphate biosynthesis; farnesyl diphosphate from geranyl diphosphate and isopentenyl diphosphate: step 1/1. Its pathway is isoprenoid biosynthesis; geranyl diphosphate biosynthesis; geranyl diphosphate from dimethylallyl diphosphate and isopentenyl diphosphate: step 1/1. It functions in the pathway isoprenoid biosynthesis; geranylgeranyl diphosphate biosynthesis; geranylgeranyl diphosphate from farnesyl diphosphate and isopentenyl diphosphate: step 1/1. Catalyzes the trans-addition of the 3 molecules of isopentenyl diphosphate (IPP) onto dimethylallyl diphosphate (DMAPP) to form geranylgeranyl pyrophosphate (GGDP). The sequence is that of Geranylgeranyl pyrophosphate synthase D (GGS-D) from Phomopsis amygdali (Fusicoccum amygdali).